A 199-amino-acid chain; its full sequence is MKFSPLVDELIQSLKCLPGVGPKSAQRMAFQLLERDRKAGQSLASALSSAMSDVGHCQACRTFTEETLCPICASHKRGNSEVICVVETPADVLAIEAGGHFSGRYFVLLGHLSPLDGVGPEELGLSLLEAHLASGEVSELILATNPTVEGDATAHFIADMAKGHQVSVSRIAHGVPVGGELEYVDSTTLALSFNGRLPL.

Residues 57 to 72 (CQACRTFTEETLCPIC) form a C4-type zinc finger. The Toprim domain maps to 81-176 (EVICVVETPA…SVSRIAHGVP (96 aa)).

The protein belongs to the RecR family.

Its function is as follows. May play a role in DNA repair. It seems to be involved in an RecBC-independent recombinational process of DNA repair. It may act with RecF and RecO. The polypeptide is Recombination protein RecR (Shewanella woodyi (strain ATCC 51908 / MS32)).